The following is a 142-amino-acid chain: Transcriptional regulator MraZ (142 aa).

SpoVT-AbrB domains are found at residues 5–51 and 77–120; these read ASAL…PRPE and AMDV…DSQT.

The protein belongs to the MraZ family. In terms of assembly, forms oligomers.

It localises to the cytoplasm. Its subcellular location is the nucleoid. This chain is Transcriptional regulator MraZ, found in Burkholderia cenocepacia (strain ATCC BAA-245 / DSM 16553 / LMG 16656 / NCTC 13227 / J2315 / CF5610) (Burkholderia cepacia (strain J2315)).